A 273-amino-acid polypeptide reads, in one-letter code: 3-keto-5-aminohexanoate cleavage enzyme (273 aa).

Glu-14 lines the (5S)-5-amino-3-oxohexanoate pocket. The Zn(2+) site is built by His-46 and His-48. (5S)-5-amino-3-oxohexanoate contacts are provided by Ser-82, Gly-85, and Ser-106. Zn(2+) is bound at residue Glu-227.

The protein belongs to the BKACE family. Kce subfamily. Homotetramer. Requires Zn(2+) as cofactor.

The catalysed reaction is (5S)-5-amino-3-oxohexanoate + acetyl-CoA = (3S)-3-aminobutanoyl-CoA + acetoacetate. It functions in the pathway amino-acid degradation; L-lysine degradation via acetate pathway. Involved in the anaerobic fermentation of lysine. Catalyzes the reversible reaction between 3-keto-5-aminohexanoate (KAH) and acetyl-CoA to form 3-aminobutyryl-CoA and acetoacetate. The reaction involves the deprotonation of KAH, the nucleophilic addition onto acetyl-CoA and the intramolecular transfer of the CoA moiety. This Acetoanaerobium sticklandii (strain ATCC 12662 / DSM 519 / JCM 1433 / CCUG 9281 / NCIMB 10654 / HF) (Clostridium sticklandii) protein is 3-keto-5-aminohexanoate cleavage enzyme.